The primary structure comprises 404 residues: Queuine tRNA-ribosyltransferase catalytic subunit (404 aa).

Asp98 (proton acceptor) is an active-site residue. Substrate is bound by residues 98–102 (DSGGF), Asp152, Gln195, and Gly222. The segment at 253–259 (GVGYAED) is RNA binding. The active-site Nucleophile is Asp272. The tract at residues 277–281 (TRTAR) is RNA binding; important for wobble base 34 recognition. Residues Cys310, Cys312, Cys315, and His347 each coordinate Zn(2+).

The protein belongs to the queuine tRNA-ribosyltransferase family. In terms of assembly, heterodimer of a catalytic subunit and an accessory subunit. Zn(2+) serves as cofactor.

The protein resides in the cytoplasm. The protein localises to the nucleus. The enzyme catalyses guanosine(34) in tRNA + queuine = queuosine(34) in tRNA + guanine. Functionally, catalytic subunit of the queuine tRNA-ribosyltransferase (TGT) that catalyzes the base-exchange of a guanine (G) residue with queuine (Q) at position 34 (anticodon wobble position) in tRNAs with GU(N) anticodons (tRNA-Asp, -Asn, -His and -Tyr), resulting in the hypermodified nucleoside queuosine (7-(((4,5-cis-dihydroxy-2-cyclopenten-1-yl)amino)methyl)-7-deazaguanosine). Catalysis occurs through a double-displacement mechanism. The nucleophile active site attacks the C1' of nucleotide 34 to detach the guanine base from the RNA, forming a covalent enzyme-RNA intermediate. The proton acceptor active site deprotonates the incoming queuine, allowing a nucleophilic attack on the C1' of the ribose to form the product. The polypeptide is Queuine tRNA-ribosyltransferase catalytic subunit (Schizosaccharomyces pombe (strain 972 / ATCC 24843) (Fission yeast)).